Here is a 491-residue protein sequence, read N- to C-terminus: MTDLTSLSAAELAGLVARGESSAAEVTQAHLDRITAVDDRVHAFLHVDTEGALDAARAVDARRAAGEPLGPLAGVPVAVKDVLTTKGIPTTAGSRILAGWRPPYDSTIVRRLRAAGTVMLGKTNMDEFAMGSSTEYSAFGPTHNPWDLSRIPGGSGGGSAAALAAYETPLSIGSDTGGSIRQPGAVTGTVGVKPTYGGTSRYGLVAFSSSLDTPGPCARTVLDAALLHEAIGGHDPSDSTSIPAPVPDVVAAARLGASGDLAGVRLGVVREFAGEGAEPGVLAAFRAAVDTLTKLGAEVVEVSCPHFQYALPAYYLIAPSECSSNLARFDGVRFGLRVGDDGNRSLEEVMSATREAGFGPEVKRRVVLGTYALSSGYYDAYYGQAQKVRTLITRDFTTAFEQVDALVSPTTPFVAFPVGARTADPYQMYLADLFTIPSNLYGGPGISVPCGLADGLPVGLQVMAPTMADDRMYRVAAALESAVGPFTPPAL.

Residues Lys80 and Ser155 each act as charge relay system in the active site. Ser179 serves as the catalytic Acyl-ester intermediate.

Belongs to the amidase family. GatA subfamily. In terms of assembly, heterotrimer of A, B and C subunits.

The catalysed reaction is L-glutamyl-tRNA(Gln) + L-glutamine + ATP + H2O = L-glutaminyl-tRNA(Gln) + L-glutamate + ADP + phosphate + H(+). Its function is as follows. Allows the formation of correctly charged Gln-tRNA(Gln) through the transamidation of misacylated Glu-tRNA(Gln) in organisms which lack glutaminyl-tRNA synthetase. The reaction takes place in the presence of glutamine and ATP through an activated gamma-phospho-Glu-tRNA(Gln). The chain is Glutamyl-tRNA(Gln) amidotransferase subunit A from Salinispora arenicola (strain CNS-205).